Consider the following 120-residue polypeptide: Large ribosomal subunit protein eL8 (120 aa).

The protein belongs to the eukaryotic ribosomal protein eL8 family. Part of the 50S ribosomal subunit. Probably part of the RNase P complex.

It localises to the cytoplasm. Functionally, multifunctional RNA-binding protein that recognizes the K-turn motif in ribosomal RNA, the RNA component of RNase P, box H/ACA, box C/D and box C'/D' sRNAs. The chain is Large ribosomal subunit protein eL8 from Halobacterium salinarum (strain ATCC 29341 / DSM 671 / R1).